Reading from the N-terminus, the 376-residue chain is Carbamoyl phosphate synthase small chain (376 aa).

The CPSase stretch occupies residues 1 to 183 (MENILLNKAL…IYKKKYIEKN (183 aa)). Ser51, Gly235, and Gly237 together coordinate L-glutamine. Residues 187–374 (NIVAYDFGIK…INLVKDYRLN (188 aa)) enclose the Glutamine amidotransferase type-1 domain. Catalysis depends on Cys263, which acts as the Nucleophile. L-glutamine-binding residues include Leu264, Gln267, Asn305, and Phe308. Active-site residues include His347 and Glu349.

This sequence belongs to the CarA family. As to quaternary structure, composed of two chains; the small (or glutamine) chain promotes the hydrolysis of glutamine to ammonia, which is used by the large (or ammonia) chain to synthesize carbamoyl phosphate. Tetramer of heterodimers (alpha,beta)4.

The enzyme catalyses hydrogencarbonate + L-glutamine + 2 ATP + H2O = carbamoyl phosphate + L-glutamate + 2 ADP + phosphate + 2 H(+). It catalyses the reaction L-glutamine + H2O = L-glutamate + NH4(+). Its pathway is amino-acid biosynthesis; L-arginine biosynthesis; carbamoyl phosphate from bicarbonate: step 1/1. It participates in pyrimidine metabolism; UMP biosynthesis via de novo pathway; (S)-dihydroorotate from bicarbonate: step 1/3. In terms of biological role, small subunit of the glutamine-dependent carbamoyl phosphate synthetase (CPSase). CPSase catalyzes the formation of carbamoyl phosphate from the ammonia moiety of glutamine, carbonate, and phosphate donated by ATP, constituting the first step of 2 biosynthetic pathways, one leading to arginine and/or urea and the other to pyrimidine nucleotides. The small subunit (glutamine amidotransferase) binds and cleaves glutamine to supply the large subunit with the substrate ammonia. This Wigglesworthia glossinidia brevipalpis protein is Carbamoyl phosphate synthase small chain.